Consider the following 98-residue polypeptide: DNA-binding protein Fis (98 aa).

Residues 74-93 (QTRAALMMGINRGTLRKKLK) constitute a DNA-binding region (H-T-H motif).

This sequence belongs to the transcriptional regulatory Fis family. Homodimer.

Its function is as follows. Activates ribosomal RNA transcription. Plays a direct role in upstream activation of rRNA promoters. This Photorhabdus laumondii subsp. laumondii (strain DSM 15139 / CIP 105565 / TT01) (Photorhabdus luminescens subsp. laumondii) protein is DNA-binding protein Fis.